The following is a 48-amino-acid chain: Large ribosomal subunit protein bL33B (48 aa).

It belongs to the bacterial ribosomal protein bL33 family.

This chain is Large ribosomal subunit protein bL33B, found in Lactococcus lactis subsp. cremoris (strain MG1363).